Reading from the N-terminus, the 256-residue chain is DNA repair protein RecO (256 aa).

This sequence belongs to the RecO family.

Functionally, involved in DNA repair and RecF pathway recombination. This is DNA repair protein RecO from Clostridium novyi (strain NT).